Here is a 581-residue protein sequence, read N- to C-terminus: DNA primase (581 aa).

The CHC2-type zinc finger occupies C40 to C64. The Toprim domain occupies N259 to P341. Mg(2+) is bound by residues E265, D309, and D311.

Belongs to the DnaG primase family. As to quaternary structure, monomer. Interacts with DnaB. Requires Zn(2+) as cofactor. It depends on Mg(2+) as a cofactor.

The enzyme catalyses ssDNA + n NTP = ssDNA/pppN(pN)n-1 hybrid + (n-1) diphosphate.. Functionally, RNA polymerase that catalyzes the synthesis of short RNA molecules used as primers for DNA polymerase during DNA replication. The protein is DNA primase of Shigella flexneri.